The sequence spans 295 residues: Ribosomal RNA small subunit methyltransferase A (295 aa).

S-adenosyl-L-methionine is bound by residues Asn-25, Leu-27, Gly-52, Glu-73, Asp-98, and Asn-120.

It belongs to the class I-like SAM-binding methyltransferase superfamily. rRNA adenine N(6)-methyltransferase family. RsmA subfamily.

Its subcellular location is the cytoplasm. The enzyme catalyses adenosine(1518)/adenosine(1519) in 16S rRNA + 4 S-adenosyl-L-methionine = N(6)-dimethyladenosine(1518)/N(6)-dimethyladenosine(1519) in 16S rRNA + 4 S-adenosyl-L-homocysteine + 4 H(+). Specifically dimethylates two adjacent adenosines (A1518 and A1519) in the loop of a conserved hairpin near the 3'-end of 16S rRNA in the 30S particle. May play a critical role in biogenesis of 30S subunits. This is Ribosomal RNA small subunit methyltransferase A from Desulfotalea psychrophila (strain LSv54 / DSM 12343).